We begin with the raw amino-acid sequence, 341 residues long: MIQFKNISKHYQLKGQTIHALDQINLDIPAGSIFGIIGYSGAGKSTLIRLINLLERPTHGQIIINQKDFTALNAQSLRQERANIGMIFQHFNLLQTKTVAANIEMPLKLLGYSKIEREKRLMELLDFIDLTHKKDAFPDELSGGQKQRVGIARALANHPKILLCDEATSALDPQTTKSVLALLKKINKEQGITIVMVTHEMDVIESICDHVAVMESGHVIETGPTVEIFSNPQHPTTKTFIQTVLQQHLPVNILSKLEHQHHHSIYRLQFLGKSAQEPVIQSMIKQFDISLNILFANMTEIDGTVIGQMFVQLLGDDTLIQQAIEFLERHGVSVNQSGEQV.

Residues isoleucine 2 to isoleucine 241 form the ABC transporter domain. Glycine 38–serine 45 serves as a coordination point for ATP.

This sequence belongs to the ABC transporter superfamily. Methionine importer (TC 3.A.1.24) family. As to quaternary structure, the complex is composed of two ATP-binding proteins (MetN), two transmembrane proteins (MetI) and a solute-binding protein (MetQ).

The protein localises to the cell inner membrane. The catalysed reaction is L-methionine(out) + ATP + H2O = L-methionine(in) + ADP + phosphate + H(+). It carries out the reaction D-methionine(out) + ATP + H2O = D-methionine(in) + ADP + phosphate + H(+). Functionally, part of the ABC transporter complex MetNIQ involved in methionine import. Responsible for energy coupling to the transport system. This chain is Methionine import ATP-binding protein MetN 2, found in Acinetobacter baylyi (strain ATCC 33305 / BD413 / ADP1).